A 403-amino-acid polypeptide reads, in one-letter code: Na(+)-translocating NADH-quinone reductase subunit B (403 aa).

3 helical membrane-spanning segments follow: residues Ile56–Gly76, Leu114–Val134, and Leu165–Ala185. FMN phosphoryl threonine is present on Thr231. 5 consecutive transmembrane segments (helical) span residues Gly260–Met280, Ile287–Ser307, Met312–Phe332, Trp348–Phe368, and Gly371–Ala391.

The protein belongs to the NqrB/RnfD family. Composed of six subunits; NqrA, NqrB, NqrC, NqrD, NqrE and NqrF. It depends on FMN as a cofactor.

The protein resides in the cell inner membrane. It carries out the reaction a ubiquinone + n Na(+)(in) + NADH + H(+) = a ubiquinol + n Na(+)(out) + NAD(+). NQR complex catalyzes the reduction of ubiquinone-1 to ubiquinol by two successive reactions, coupled with the transport of Na(+) ions from the cytoplasm to the periplasm. NqrA to NqrE are probably involved in the second step, the conversion of ubisemiquinone to ubiquinol. The protein is Na(+)-translocating NADH-quinone reductase subunit B of Pseudoalteromonas atlantica (strain T6c / ATCC BAA-1087).